Reading from the N-terminus, the 92-residue chain is Acylphosphatase (92 aa).

One can recognise an Acylphosphatase-like domain in the interval 6 to 92 (RAHVYVSGRV…EGVDGFEIRR (87 aa)). Residues Arg21 and Asn39 contribute to the active site.

Belongs to the acylphosphatase family.

It carries out the reaction an acyl phosphate + H2O = a carboxylate + phosphate + H(+). This Natronomonas pharaonis (strain ATCC 35678 / DSM 2160 / CIP 103997 / JCM 8858 / NBRC 14720 / NCIMB 2260 / Gabara) (Halobacterium pharaonis) protein is Acylphosphatase (acyP).